A 184-amino-acid polypeptide reads, in one-letter code: Protein FAM89A (184 aa).

The interval 148 to 184 (YFQEQNSLHDRRDRGPPRDLSLPVSSLSSSDWILESI) is disordered. The span at 154–164 (SLHDRRDRGPP) shows a compositional bias: basic and acidic residues. Positions 167–184 (LSLPVSSLSSSDWILESI) are enriched in low complexity.

It belongs to the FAM89 family.

The polypeptide is Protein FAM89A (FAM89A) (Homo sapiens (Human)).